Here is a 292-residue protein sequence, read N- to C-terminus: Transcription antiterminator LacT (292 aa).

PRD domains are found at residues 66-170 and 172-284; these read NIPI…DDGE and VFGK…APAQ.

Belongs to the transcriptional antiterminator BglG family.

Mediates positive regulation of the lac operon by functioning as an antiterminator factor of transcription. The sequence is that of Transcription antiterminator LacT (lacT) from Lacticaseibacillus casei (Lactobacillus casei).